The following is a 267-amino-acid chain: NAD-capped RNA hydrolase NudC (267 aa).

Substrate is bound at residue Arg-70. Positions 99 and 102 each coordinate Zn(2+). Residue Glu-112 coordinates substrate. Zn(2+) contacts are provided by Cys-117 and Cys-122. Tyr-127 is a substrate binding site. In terms of domain architecture, Nudix hydrolase spans 128–257 (PVICPSIIVA…TIARALIEAT (130 aa)). A divalent metal cation is bound by residues Ala-166, Glu-182, and Glu-186. The short motif at 167 to 188 (GFVEVGESFEQTIHREVFEETG) is the Nudix box element. A substrate-binding site is contributed by 200-207 (QPWAFPNS). Position 227 (Glu-227) interacts with a divalent metal cation. Ala-250 is a binding site for substrate.

It belongs to the Nudix hydrolase family. NudC subfamily. As to quaternary structure, homodimer. Mg(2+) is required as a cofactor. It depends on Mn(2+) as a cofactor. Zn(2+) serves as cofactor.

It carries out the reaction a 5'-end NAD(+)-phospho-ribonucleoside in mRNA + H2O = a 5'-end phospho-adenosine-phospho-ribonucleoside in mRNA + beta-nicotinamide D-ribonucleotide + 2 H(+). The enzyme catalyses NAD(+) + H2O = beta-nicotinamide D-ribonucleotide + AMP + 2 H(+). It catalyses the reaction NADH + H2O = reduced beta-nicotinamide D-ribonucleotide + AMP + 2 H(+). In terms of biological role, mRNA decapping enzyme that specifically removes the nicotinamide adenine dinucleotide (NAD) cap from a subset of mRNAs by hydrolyzing the diphosphate linkage to produce nicotinamide mononucleotide (NMN) and 5' monophosphate mRNA. The NAD-cap is present at the 5'-end of some mRNAs and stabilizes RNA against 5'-processing. Has preference for mRNAs with a 5'-end purine. Catalyzes the hydrolysis of a broad range of dinucleotide pyrophosphates. This Mannheimia succiniciproducens (strain KCTC 0769BP / MBEL55E) protein is NAD-capped RNA hydrolase NudC.